Here is a 339-residue protein sequence, read N- to C-terminus: Fructose-1,6-bisphosphatase class 1 (339 aa).

Positions 92, 114, 116, and 117 each coordinate Mg(2+). Substrate-binding positions include Asp-117–Ser-120, Asn-213, and Lys-279. Glu-285 contacts Mg(2+).

Belongs to the FBPase class 1 family. Homotetramer. Mg(2+) is required as a cofactor.

The protein localises to the cytoplasm. The catalysed reaction is beta-D-fructose 1,6-bisphosphate + H2O = beta-D-fructose 6-phosphate + phosphate. Its pathway is carbohydrate biosynthesis; gluconeogenesis. In Acidovorax sp. (strain JS42), this protein is Fructose-1,6-bisphosphatase class 1.